The chain runs to 88 residues: Mitochondrial import inner membrane translocase subunit TIM9 (88 aa).

Positions 35 to 59 match the Twin CX3C motif motif; that stretch reads CFDDCVNDFTSNNLTTKETGCITKC. 2 disulfide bridges follow: cysteine 35-cysteine 59 and cysteine 39-cysteine 55.

The protein belongs to the small Tim family. In terms of assembly, heterohexamer; composed of 3 copies of TIM9 and 3 copies of TIM10, named soluble 70 kDa complex. Associates with the TIM22 complex, whose core is composed of TIM22 and TIM54. Interacts with the transmembrane regions of multi-pass transmembrane proteins in transit.

The protein localises to the mitochondrion inner membrane. Mitochondrial intermembrane chaperone that participates in the import and insertion of multi-pass transmembrane proteins into the mitochondrial inner membrane. Also required for the transfer of beta-barrel precursors from the TOM complex to the sorting and assembly machinery (SAM complex) of the outer membrane. Acts as a chaperone-like protein that protects the hydrophobic precursors from aggregation and guide them through the mitochondrial intermembrane space. The protein is Mitochondrial import inner membrane translocase subunit TIM9 (TIM9) of Debaryomyces hansenii (strain ATCC 36239 / CBS 767 / BCRC 21394 / JCM 1990 / NBRC 0083 / IGC 2968) (Yeast).